Reading from the N-terminus, the 369-residue chain is Galactose-1-phosphate uridylyltransferase (369 aa).

Zn(2+)-binding residues include Cys-54 and Cys-57. Residues Ala-63 and 79–80 each bind UDP-alpha-D-glucose; that span reads ND. His-127 contributes to the Zn(2+) binding site. Position 172 (Asn-172) interacts with UDP-alpha-D-glucose. Position 183 (His-183) interacts with Zn(2+). Residue His-185 is the Tele-UMP-histidine intermediate of the active site. Gln-187 contributes to the UDP-alpha-D-glucose binding site. Positions 201, 300, 317, and 319 each coordinate Fe cation. Residues 332–335 and 337–338 each bind UDP-alpha-D-glucose; these read KFCV and FE.

It belongs to the galactose-1-phosphate uridylyltransferase type 1 family. Homodimer. The cofactor is Zn(2+).

The catalysed reaction is alpha-D-galactose 1-phosphate + UDP-alpha-D-glucose = alpha-D-glucose 1-phosphate + UDP-alpha-D-galactose. The protein operates within carbohydrate metabolism; galactose metabolism. The protein is Galactose-1-phosphate uridylyltransferase (gal7) of Schizosaccharomyces pombe (strain 972 / ATCC 24843) (Fission yeast).